The primary structure comprises 168 residues: Probable acetolactate synthase small subunit (168 aa).

The 75-residue stretch at 10-84 (IISALVEHKP…DVIKVRDLEP (75 aa)) folds into the ACT domain.

It belongs to the acetolactate synthase small subunit family. As to quaternary structure, dimer of large and small chains.

It catalyses the reaction 2 pyruvate + H(+) = (2S)-2-acetolactate + CO2. It participates in amino-acid biosynthesis; L-isoleucine biosynthesis; L-isoleucine from 2-oxobutanoate: step 1/4. It functions in the pathway amino-acid biosynthesis; L-valine biosynthesis; L-valine from pyruvate: step 1/4. The polypeptide is Probable acetolactate synthase small subunit (ilvH) (Methanothermobacter thermautotrophicus (strain ATCC 29096 / DSM 1053 / JCM 10044 / NBRC 100330 / Delta H) (Methanobacterium thermoautotrophicum)).